The sequence spans 902 residues: Nuclear factor of activated T-cells, cytoplasmic 4 (902 aa).

2 disordered regions span residues 16 to 180 (VFGE…SSWS) and 208 to 369 (RFGL…GGSR). Pro residues predominate over residues 50–81 (EPPPYGAAPIGIPRPPPPRPGMHSPPPRPAPS). Positions 96 to 109 (GGPGGGAGGAGGGR) are enriched in gly residues. Residues 114–119 (PSIRIT) form a calcineurin-binding region. Residues 151 to 165 (GFGGYREAGGQGGGA) show a composition bias toward gly residues. Over residues 166–180 (FFSPSPGSSSLSSWS) the composition is skewed to low complexity. 2 positions are modified to phosphoserine; by MAPK7 and MAPK14: serine 168 and serine 170. 2 positions are modified to phosphoserine; by MAPK8 and MAPK9: serine 213 and serine 217. Residues 213–229 (SPLPSPRASPRPWTPED) form an SP 1 repeat. A 2 approximate SP repeats region spans residues 213-293 (SPLPSPRASP…LSRRGSLGEE (81 aa)). Pro residues-rich tracts occupy residues 215 to 227 (LPSPRASPRPWTP) and 254 to 263 (GPTPASPRPA). Positions 268–270 (KRR) match the Nuclear localization signal motif. Residues 272–288 (SSSGTPSSASPALSRRG) are compositionally biased toward low complexity. The SP 2; approximate repeat unit spans residues 277 to 293 (PSSASPALSRRGSLGEE). Residues serine 289 and serine 344 each carry the phosphoserine; by RPS6KA3 modification. Residues 401 to 582 (SALPPLDWPL…VPIECSQRSA (182 aa)) form the RHD domain. Residues 430 to 437 (RAHYETEG) mediate DNA binding. Residues 586 to 683 (PQVEAYSPSA…KRSPTQSFRF (98 aa)) enclose the IPT/TIG domain. Residues 672–674 (RRK) carry the Nuclear localization signal motif. Lysine 689 participates in a covalent cross-link: Glycyl lysine isopeptide (Lys-Gly) (interchain with G-Cter in SUMO2). The disordered stretch occupies residues 791-870 (PYGGRGSSFS…GGYSSGFRDS (80 aa)). Positions 805-824 (FSPPAPFRPPPLPASPPLEG) are enriched in pro residues.

As to quaternary structure, member of the multicomponent NFATC transcription complex that consists of at least two components, a pre-existing cytoplasmic component NFATC2 and an inducible nuclear component NFATC1. Other NFAT proteins, such as NFATC3, or members of the activating protein-1 (AP-1) family and MAF can also bind the complex. NFAT proteins can bind DNA as monomers or dimers. Component of a promoter-binding complex composed of STAT3, NFATC3 and NFATC4; complex formation is enhanced by calcineurin. Interacts with CREBBP; this interaction potentiates transcription activation. Interacts with MAPK8/JNK1 and MAPK9/JNK2. Interacts with GATA4 (via the second Zn finger). Interacts (via N-terminus) with IRAK1 (via C-terminus). Interacts with RPS6KA3. Interacts with HOMER1, HOMER2 and HOMER3; this interaction competes with calcineurin/PPP3CA-binding and hence prevents NFATC4 dephosphorylation and activation. Interacts with ESR1 and ESR2; this interaction decreases NFATC4 transcriptional activity. Interacts with MTOR and MAPK7/ERK5. Interacts with TRIM17; this interaction prevents NFATC3 nuclear localization. Interacts with TCF25 (via C-terminus); the interaction leads to suppression of NFATC4 transcription factor activity and is reduced following stimulation with angiotensin-2. Post-translationally, phosphorylated by NFATC-kinases; dephosphorylated by calcineurin/PPP3CA. Phosphorylated on Ser-168 and Ser-170 by MTOR, IRAK1, MAPK7/ERK5 and MAPK14/p38, on Ser-213 and Ser-217 by MAPK8/JNK1 and MAPK9/JNK2, and on Ser-289 and Ser-344 by RPS6KA3. Phosphorylated by GSK3B. Phosphorylation by GSK3B markedly increases NFATC4 ubiquitination. Phosphorylation at Ser-168 and Ser-170 is stimulated by UV irradiation. Phosphorylation determines subcellular location: the hyperphosphorylated protein is cytosolic, while the dephosphorylated form is targeted to the nucleus. Ubiquitinated, leading to degradation by the proteasome. Ubiquitination may be stimulated by GSK3B-dependent phosphorylation. Polyubiquitin linkage mainly occurs through 'Lys-48'. As to expression, widely expressed, with high levels in placenta, lung, kidney, testis and ovary. Weakly expressed in spleen and thymus. In the hippocampus, expressed in the granular layer of the dentate gyrus, in the pyramidal neurons of CA3 region, and in the hippocampal fissure. Expressed in the heart (at protein level).

The protein localises to the cytoplasm. The protein resides in the nucleus. With respect to regulation, transcriptional activity may be repressed by ESR1 and ESR2. Its function is as follows. Ca(2+)-regulated transcription factor that is involved in several processes, including the development and function of the immune, cardiovascular, musculoskeletal, and nervous systems. Involved in T-cell activation, stimulating the transcription of cytokine genes, including that of IL2 and IL4. Along with NFATC3, involved in embryonic heart development. Following JAK/STAT signaling activation and as part of a complex with NFATC3 and STAT3, binds to the alpha-beta E4 promoter region of CRYAB and activates transcription in cardiomyocytes. Involved in mitochondrial energy metabolism required for cardiac morphogenesis and function. Transactivates many genes involved in the cardiovascular system, including AGTR2, NPPB/BNP (in synergy with GATA4), NPPA/ANP/ANF and MYH7/beta-MHC. Involved in the regulation of adult hippocampal neurogenesis. Involved in BDNF-driven pro-survival signaling in hippocampal adult-born neurons. Involved in the formation of long-term spatial memory and long-term potentiation. In cochlear nucleus neurons, may play a role in deafferentation-induced apoptosis during the developmental critical period, when auditory neurons depend on afferent input for survival. Binds to and activates the BACE1/Beta-secretase 1 promoter, hence may regulate the proteolytic processing of the amyloid precursor protein (APP). Plays a role in adipocyte differentiation. May be involved in myoblast differentiation into myotubes. Binds the consensus DNA sequence 5'-GGAAAAT-3'. In the presence of CREBBP, activates TNF transcription. Binds to PPARG gene promoter and regulates its activity. Binds to PPARG and REG3G gene promoters. This Homo sapiens (Human) protein is Nuclear factor of activated T-cells, cytoplasmic 4 (NFATC4).